Reading from the N-terminus, the 199-residue chain is Chaperone protein TorD (199 aa).

It belongs to the TorD/DmsD family. TorD subfamily.

Its subcellular location is the cytoplasm. In terms of biological role, involved in the biogenesis of TorA. Acts on TorA before the insertion of the molybdenum cofactor and, as a result, probably favors a conformation of the apoenzyme that is competent for acquiring the cofactor. The sequence is that of Chaperone protein TorD from Actinobacillus pleuropneumoniae serotype 7 (strain AP76).